The primary structure comprises 463 residues: NADH dehydrogenase [ubiquinone] iron-sulfur protein 2, mitochondrial (463 aa).

The transit peptide at 1–33 (MAALRVLCGLRGVAAQVLRPGAGVRLPIQPSRG) directs the protein to the mitochondrion. Position 62 is an N6-acetyllysine (Lys62). Arg118 is modified (symmetric dimethylarginine). [4Fe-4S] cluster-binding residues include Cys326, Cys332, and Cys347.

Belongs to the complex I 49 kDa subunit family. In terms of assembly, core subunit of respiratory chain NADH dehydrogenase (Complex I) which is composed of 45 different subunits. Component of the iron-sulfur (IP) fragment of the enzyme. Interacts with NDUFAF3. Interacts with NDUFAF7. Interacts with CERS2. [4Fe-4S] cluster serves as cofactor. Post-translationally, dimethylation at Arg-118 by NDUFAF7 takes place after NDUFS2 assembles into the complex I, leading to stabilize the early intermediate complex.

Its subcellular location is the mitochondrion inner membrane. It carries out the reaction a ubiquinone + NADH + 5 H(+)(in) = a ubiquinol + NAD(+) + 4 H(+)(out). Its function is as follows. Core subunit of the mitochondrial membrane respiratory chain NADH dehydrogenase (Complex I) which catalyzes electron transfer from NADH through the respiratory chain, using ubiquinone as an electron acceptor. Essential for the catalytic activity and assembly of complex I. Redox-sensitive, critical component of the oxygen-sensing pathway in the pulmonary vasculature which plays a key role in acute pulmonary oxygen-sensing and hypoxic pulmonary vasoconstriction. Plays an important role in carotid body sensing of hypoxia. Essential for glia-like neural stem and progenitor cell proliferation, differentiation and subsequent oligodendrocyte or neuronal maturation. In Gorilla gorilla gorilla (Western lowland gorilla), this protein is NADH dehydrogenase [ubiquinone] iron-sulfur protein 2, mitochondrial (NDUFS2).